A 123-amino-acid polypeptide reads, in one-letter code: MDDSKVVGGKVKKPGKRGRKPAKIDLKAKLERSRQSARECRARKKLRYQYLEELVSSRERAICALREELEMYKQWCMAMDQGKIPSEIRALLTGEEQNKSQQNSSRHPKAGKTDANTNSLVGN.

Residues 1–24 (MDDSKVVGGKVKKPGKRGRKPAKI) are disordered. Residues 10 to 21 (KVKKPGKRGRKP) show a composition bias toward basic residues. One can recognise a bZIP domain in the interval 23-86 (KIDLKAKLER…MAMDQGKIPS (64 aa)). The tract at residues 29–60 (KLERSRQSARECRARKKLRYQYLEELVSSRER) is basic motif. The leucine-zipper stretch occupies residues 62–69 (ICALREEL). The disordered stretch occupies residues 93–123 (TGEEQNKSQQNSSRHPKAGKTDANTNSLVGN). Residues 114–123 (DANTNSLVGN) are compositionally biased toward polar residues.

The protein belongs to the bZIP family. ATF subfamily. As to quaternary structure, interacts with CREB1; regulates CREB1 phosphorylation, stability and transcriptional activity. Phosphorylated by AMPK.

The protein resides in the nucleus. Its function is as follows. Probable regulator of CREB1 transcriptional activity which is involved in adipose cells differentiation. May also play a regulatory role in the cell cycle. This is cAMP-responsive element-binding protein-like 2 (Crebl2) from Rattus norvegicus (Rat).